The chain runs to 205 residues: MTRIALLDYGMGNLHSAAKALEHVGATVDVTNDPKLIAKADKIVFPGVGAMRDCMQGMHEAGIDEVVRQAVFNKPVLAICVGMQALLESSEENGGVPALGIFEGAVKHFPDLGHLKVPHMGWNQVYQNDPAHPMWNNIDQDSRFYFVHSYYVEPKQSDLIAATCDYGLQFCTAIHKDNLFATQFHPEKSHTAGLQLLKNFVEWNI.

The Glutamine amidotransferase type-1 domain maps to 3-205; sequence RIALLDYGMG…LLKNFVEWNI (203 aa). Cysteine 80 acts as the Nucleophile in catalysis. Residues histidine 185 and glutamate 187 contribute to the active site.

As to quaternary structure, heterodimer of HisH and HisF.

Its subcellular location is the cytoplasm. The enzyme catalyses 5-[(5-phospho-1-deoxy-D-ribulos-1-ylimino)methylamino]-1-(5-phospho-beta-D-ribosyl)imidazole-4-carboxamide + L-glutamine = D-erythro-1-(imidazol-4-yl)glycerol 3-phosphate + 5-amino-1-(5-phospho-beta-D-ribosyl)imidazole-4-carboxamide + L-glutamate + H(+). The catalysed reaction is L-glutamine + H2O = L-glutamate + NH4(+). Its pathway is amino-acid biosynthesis; L-histidine biosynthesis; L-histidine from 5-phospho-alpha-D-ribose 1-diphosphate: step 5/9. IGPS catalyzes the conversion of PRFAR and glutamine to IGP, AICAR and glutamate. The HisH subunit catalyzes the hydrolysis of glutamine to glutamate and ammonia as part of the synthesis of IGP and AICAR. The resulting ammonia molecule is channeled to the active site of HisF. In Acinetobacter baylyi (strain ATCC 33305 / BD413 / ADP1), this protein is Imidazole glycerol phosphate synthase subunit HisH.